A 209-amino-acid polypeptide reads, in one-letter code: Ribosomal RNA large subunit methyltransferase E (209 aa).

Positions 63, 65, 83, 99, and 124 each coordinate S-adenosyl-L-methionine. The active-site Proton acceptor is lysine 164.

It belongs to the class I-like SAM-binding methyltransferase superfamily. RNA methyltransferase RlmE family.

It is found in the cytoplasm. It catalyses the reaction uridine(2552) in 23S rRNA + S-adenosyl-L-methionine = 2'-O-methyluridine(2552) in 23S rRNA + S-adenosyl-L-homocysteine + H(+). Functionally, specifically methylates the uridine in position 2552 of 23S rRNA at the 2'-O position of the ribose in the fully assembled 50S ribosomal subunit. The polypeptide is Ribosomal RNA large subunit methyltransferase E (Aliivibrio fischeri (strain MJ11) (Vibrio fischeri)).